The primary structure comprises 502 residues: Smr domain-containing protein C1235.03 (502 aa).

Residues 150–184 (LITSNIGHRSRQRKKKTKKATNSRKPLSKFQSNTE) form a disordered region. The segment covering 157–171 (HRSRQRKKKTKKATN) has biased composition (basic residues). Positions 411–459 (SLDLHGATVREAKTIVRERVAAWWAKEADTSPNSIRPFVIVTGRGNHSI) constitute a Smr domain.

The protein resides in the nucleus. Its subcellular location is the nucleolus. This is Smr domain-containing protein C1235.03 from Schizosaccharomyces pombe (strain 972 / ATCC 24843) (Fission yeast).